Reading from the N-terminus, the 195-residue chain is Pyruvoyl-dependent arginine decarboxylase AaxB (195 aa).

Pyruvic acid (Ser) is present on S53.

The protein belongs to the pyruvoyl-dependent arginine decarboxylase family. Trimer of an alpha-beta dimer. The cofactor is pyruvate.

The protein localises to the cytoplasm. It carries out the reaction L-arginine + H(+) = agmatine + CO2. In terms of biological role, part of the AaxABC system, catalyzes the decarboxylation of L-arginine. The arginine uptake by the bacterium in the macrophage may be a virulence factor against the host innate immune response. The sequence is that of Pyruvoyl-dependent arginine decarboxylase AaxB (aaxB) from Chlamydia abortus (strain DSM 27085 / S26/3) (Chlamydophila abortus).